Consider the following 161-residue polypeptide: Ubiquitin-conjugating enzyme E2Q-like protein 1 (161 aa).

A UBC core domain is found at 1–154 (MKELQDIARL…VKTHEKYGWV (154 aa)). Residue Cys-88 is the Glycyl thioester intermediate of the active site.

Belongs to the ubiquitin-conjugating enzyme family. Interacts with FBXW7.

It localises to the nucleus. It carries out the reaction S-ubiquitinyl-[E1 ubiquitin-activating enzyme]-L-cysteine + [E2 ubiquitin-conjugating enzyme]-L-cysteine = [E1 ubiquitin-activating enzyme]-L-cysteine + S-ubiquitinyl-[E2 ubiquitin-conjugating enzyme]-L-cysteine.. The protein operates within protein modification; protein ubiquitination. Probable E2 ubiquitin-protein ligase that catalyzes the covalent attachment of ubiquitin to target proteins. May facilitate the monoubiquitination and degradation of MTOR and CCNE1 through interaction with FBXW7. In Mus musculus (Mouse), this protein is Ubiquitin-conjugating enzyme E2Q-like protein 1 (Ube2ql1).